Consider the following 697-residue polypeptide: MFLKFCLWTMFFFSAWSPIGHAKYSSLLEVVTPLRVTVTRGNNISPGWLSYSLNIGGQRHIITMKPKKNLISRNFLLFTYSDQGDLLEQHHFVQNDCYYHGYVDEDLESPVIVNTCFGSLQGTLEINGTSYEIMPKSSTSTFEHLVYKMDSGDSESSPMRCGLSEEETAQQTKLQESNAPTLLQIPYENWWTHHRFIEYFVVLDHKQYVHRNNNITTCIQDMLQIVNGVNGYYLQIDTDVVLTTLEVWNEKNYINVELSIFKVLGDFCTWKQNMFGNRIRHDIIHLLVRQGYGLYLGLAYLADVCTPYNCGVSSVLSDVMSDMAHIVAHEMGHNFGMKHDGIGCTCGLKDCLMAPYKTNSPKFSNCSYEEMYSVVTKRSCLYDIPEALVTNLTVCGNKVVEEGEQCDCGNSESCLQDPCCSSDCVLKPGAQCAFGLCCKNCQFLKAGTVCRKEKNECDLPEWCNGTSAECPGDVYKADGIPCSGEGYCYKMECHQRDEQCRKIFGNGSRSADEICYMEMNRQGDRFGNCGNDSSTYRTCQIADVLCGQIQCENVIQLPQRRNHETVHYTHFSNITCWTMDYHFGITIDDIGAVSDGTAYAPDHICVDRKCVSKSVLVSNCSPQLYHMQGICNNKQHCHCGVTWKPPDCQKRGHGGSIDSGPPPLPLSHSKWIVYILIVLDVCIVIIIYLFSFYKLSK.

The first 22 residues, 1 to 22 (MFLKFCLWTMFFFSAWSPIGHA), serve as a signal peptide directing secretion. A propeptide spanning residues 23–187 (KYSSLLEVVT…NAPTLLQIPY (165 aa)) is cleaved from the precursor. The N-linked (GlcNAc...) asparagine glycan is linked to Asn127. The Cysteine switch signature appears at 159–166 (MRCGLSEE). Position 161 (Cys161) interacts with Zn(2+). Topologically, residues 188 to 671 (ENWWTHHRFI…PPLPLSHSKW (484 aa)) are extracellular. The Peptidase M12B domain maps to 195 to 385 (RFIEYFVVLD…TKRSCLYDIP (191 aa)). Residue Asn214 is glycosylated (N-linked (GlcNAc...) asparagine). Intrachain disulfides connect Cys305-Cys380, Cys344-Cys366, and Cys346-Cys351. His329 lines the Zn(2+) pocket. The active site involves Glu330. Residues His333 and His339 each coordinate Zn(2+). Asn365, Asn391, Asn464, Asn506, Asn531, and Asn573 each carry an N-linked (GlcNAc...) asparagine glycan. One can recognise a Disintegrin domain in the interval 392–478 (LTVCGNKVVE…ECPGDVYKAD (87 aa)). Cysteines 450 and 470 form a disulfide. Residues 616–649 (LVSNCSPQLYHMQGICNNKQHCHCGVTWKPPDCQ) form the EGF-like domain. Intrachain disulfides connect Cys620–Cys631 and Cys639–Cys648. The helical transmembrane segment at 672-692 (IVYILIVLDVCIVIIIYLFSF) threads the bilayer. The Cytoplasmic segment spans residues 693–697 (YKLSK).

Requires Zn(2+) as cofactor. In terms of tissue distribution, expressed in sperm (at protein level). Expressed specifically in testis.

It localises to the membrane. Functionally, sperm surface membrane protein that may be involved in spermatogenesis and fertilization. In Mus musculus (Mouse), this protein is Disintegrin and metalloproteinase domain-containing protein 26A.